Here is a 420-residue protein sequence, read N- to C-terminus: Exodeoxyribonuclease 7 large subunit (420 aa).

Belongs to the XseA family. In terms of assembly, heterooligomer composed of large and small subunits.

The protein localises to the cytoplasm. It catalyses the reaction Exonucleolytic cleavage in either 5'- to 3'- or 3'- to 5'-direction to yield nucleoside 5'-phosphates.. In terms of biological role, bidirectionally degrades single-stranded DNA into large acid-insoluble oligonucleotides, which are then degraded further into small acid-soluble oligonucleotides. This chain is Exodeoxyribonuclease 7 large subunit, found in Helicobacter pylori (strain HPAG1).